The chain runs to 596 residues: Bromodomain-containing protein 9 (596 aa).

Residues 1 to 10 show a composition bias toward basic residues; that stretch reads MGKKHKKHKA. Disordered stretches follow at residues 1–26 and 38–137; these read MGKKHKKHKAEWRSSYEDYTDTPLEK and EVTE…AENE. The segment covering 50 to 62 has biased composition (basic and acidic residues); sequence SYYDDRSDHERER. A Phosphoserine modification is found at Ser56. Over residues 63–73 the composition is skewed to basic residues; the sequence is HREKKKKKKKK. Basic and acidic residues predominate over residues 74 to 85; that stretch reads SEKEKHLDEEER. Over residues 86–97 the composition is skewed to basic residues; sequence RKRKEEKKRKRE. A compositionally biased stretch (basic and acidic residues) spans 111-126; sequence DPGKKVEVEPPPDRPV. In terms of domain architecture, Bromo spans 136 to 240; it reads NESTPIQRLL…HAGFKMMSKA (105 aa). Positions 214–216 are histone H4K5ac H4K8ac and histone H4K5bu H4K8bu binding; it reads TYN. The residue at position 372 (Lys372) is an N6-acetyllysine; alternate. Lys372 participates in a covalent cross-link: Glycyl lysine isopeptide (Lys-Gly) (interchain with G-Cter in SUMO2); alternate. Residues 536 to 596 are disordered; it reads AQAERGGSRP…SPEPAAPAKN (61 aa). Low complexity predominate over residues 543–555; the sequence is SRPSSNLSSLSTA. A phosphoserine mark is found at Ser565 and Ser587.

In terms of assembly, binds acetylated histones H3 and H4. Binds butyrylated histone H4. Component of the multiprotein chromatin-remodeling subcomplex SWI/SNF called GBAF, which includes at least BICRA or BICRAL (mutually exclusive), BRD9, SS18, the core BAF subunits, SMARCA2/BRM, SMARCA4/BRG1/BAF190A, ACTL6A/BAF53, SMARCC1/BAF155, and SMARCD1/BAF60A. Interacts (via N-terminal bromodomain) with acetylated RAD54. Interacts (via C-terminus) with RAD51.

The protein resides in the nucleus. Its function is as follows. Plays a role in chromatin remodeling and regulation of transcription. Acts as a chromatin reader that recognizes and binds acylated histones: binds histones that are acetylated and/or butyrylated. Component of SWI/SNF chromatin remodeling subcomplex GBAF that carries out key enzymatic activities, changing chromatin structure by altering DNA-histone contacts within a nucleosome in an ATP-dependent manner. Also orchestrates the RAD51-RAD54 complex formation and thereby plays a role in homologous recombination (HR). In Mus musculus (Mouse), this protein is Bromodomain-containing protein 9 (Brd9).